The sequence spans 474 residues: MSIKVTQEKLPASRVGLQIEVSGEQSRQVYERTLTRLSREVRFPGFRPGKVPRPVLIQRLGETALKANAIEDLVQQSLESAIAQESIPAIGNYQLSSDFETLVAAFQPGKSFSFEASVDVQPTATLAQYTGLTVEVAEVPFDANRVDNVLAEQQKQMATLVPVEGRNAAIGDVAVIDFQGILVESGEEIPGGSGTDFQIEVEEDRFIPGFISGIVGMAIEETRTVDATFPETYAQEEVAGKAAQFTITLKELKTRDLPELDDAFAQEASQYETIEELKTALTERFQAEHESEVKASKRDAILTALADQLDVEIPESLLQREISAMINETASRLSGQGMDVRKLFTEEVLERLRENSKDEDEQRLRRTIALGELAKVTETQVDDEAVKARAAELLSNYPRPQEVDRDRLITVVREELLEDKLLEWFEANNSVTFVAPKAAETEVDAASATVETTATETAEEAPEAPKAKKGKKKA.

The PPIase FKBP-type domain occupies 171–258 (GDVAVIDFQG…LKELKTRDLP (88 aa)). The tract at residues 441-474 (TEVDAASATVETTATETAEEAPEAPKAKKGKKKA) is disordered. The segment covering 444-456 (DAASATVETTATE) has biased composition (low complexity).

The protein belongs to the FKBP-type PPIase family. Tig subfamily.

The protein localises to the cytoplasm. The enzyme catalyses [protein]-peptidylproline (omega=180) = [protein]-peptidylproline (omega=0). Involved in protein export. Acts as a chaperone by maintaining the newly synthesized protein in an open conformation. Functions as a peptidyl-prolyl cis-trans isomerase. This is Trigger factor from Synechococcus sp. (strain ATCC 27144 / PCC 6301 / SAUG 1402/1) (Anacystis nidulans).